A 196-amino-acid chain; its full sequence is Carnitine operon protein CaiE (196 aa).

The segment at 173 to 196 (TQPLRQMEENRPRLQGTTDVTPKR) is disordered. Residues 187–196 (QGTTDVTPKR) show a composition bias toward polar residues.

Belongs to the transferase hexapeptide repeat family.

The protein operates within amine and polyamine metabolism; carnitine metabolism. Overproduction of CaiE stimulates the activity of CaiB and CaiD. The chain is Carnitine operon protein CaiE from Escherichia coli O157:H7.